A 253-amino-acid polypeptide reads, in one-letter code: uncharacterized protein (253 aa).

A2 carries the N-acetylalanine modification.

This sequence belongs to the NAD(P)-dependent epimerase/dehydratase family. As to quaternary structure, homodimer.

This is an uncharacterized protein from Arabidopsis thaliana (Mouse-ear cress).